The following is a 189-amino-acid chain: Large ribosomal subunit protein bL17 (189 aa).

The disordered stretch occupies residues 136–189 (KAAPAAEEEVVETEEAPAVEAEAAESEEAPAAEAEAAEAEAAETEEAPAAEDKK). The segment covering 141 to 189 (AEEEVVETEEAPAVEAEAAESEEAPAAEAEAAEAEAAETEEAPAAEDKK) has biased composition (acidic residues).

The protein belongs to the bacterial ribosomal protein bL17 family. As to quaternary structure, part of the 50S ribosomal subunit. Contacts protein L32.

The protein is Large ribosomal subunit protein bL17 of Paenarthrobacter aurescens (strain TC1).